We begin with the raw amino-acid sequence, 177 residues long: Adenine phosphoribosyltransferase (177 aa).

Belongs to the purine/pyrimidine phosphoribosyltransferase family. In terms of assembly, homodimer.

It localises to the cytoplasm. It carries out the reaction AMP + diphosphate = 5-phospho-alpha-D-ribose 1-diphosphate + adenine. It participates in purine metabolism; AMP biosynthesis via salvage pathway; AMP from adenine: step 1/1. Functionally, catalyzes a salvage reaction resulting in the formation of AMP, that is energically less costly than de novo synthesis. This is Adenine phosphoribosyltransferase from Chlorobium phaeobacteroides (strain DSM 266 / SMG 266 / 2430).